The primary structure comprises 493 residues: 3-octaprenyl-4-hydroxybenzoate carboxy-lyase (493 aa).

Asn-172 is a binding site for Mn(2+). Residues 175 to 177, 189 to 191, and 194 to 195 contribute to the prenylated FMN site; these read IYR, RWL, and RG. Glu-238 contacts Mn(2+). The Proton donor role is filled by Asp-287.

This sequence belongs to the UbiD family. In terms of assembly, homohexamer. Prenylated FMN serves as cofactor. Mn(2+) is required as a cofactor.

Its subcellular location is the cell membrane. The enzyme catalyses a 4-hydroxy-3-(all-trans-polyprenyl)benzoate + H(+) = a 2-(all-trans-polyprenyl)phenol + CO2. It participates in cofactor biosynthesis; ubiquinone biosynthesis. In terms of biological role, catalyzes the decarboxylation of 3-octaprenyl-4-hydroxy benzoate to 2-octaprenylphenol, an intermediate step in ubiquinone biosynthesis. This Shewanella baltica (strain OS155 / ATCC BAA-1091) protein is 3-octaprenyl-4-hydroxybenzoate carboxy-lyase.